The following is a 177-amino-acid chain: MSRIGKKPVQVPAGITATVDGQKVTAKGPKGELFFVANDEISLKLEDNAVVVTPLNQSKNARSKWGMSRTMIEGIFKGVKDGFERKLEINGVGYRAAMQGKNLQLALGFSHDVVYEPPVGITIAVPKPTEIVVSGINKQQVGQVAAEIREYRGPEPYKGKGVKYADERIVRKEGKKK.

The protein belongs to the universal ribosomal protein uL6 family. As to quaternary structure, part of the 50S ribosomal subunit.

Its function is as follows. This protein binds to the 23S rRNA, and is important in its secondary structure. It is located near the subunit interface in the base of the L7/L12 stalk, and near the tRNA binding site of the peptidyltransferase center. This Rhizobium etli (strain CIAT 652) protein is Large ribosomal subunit protein uL6.